We begin with the raw amino-acid sequence, 143 residues long: UPF0299 membrane protein CGSHiEE_04225 (143 aa).

The next 4 membrane-spanning stretches (helical) occupy residues 1–21 (MIQK…MLSL), 33–52 (VPGS…TRVI), 60–80 (GASL…VGII), and 92–112 (ILLV…GFLG).

Belongs to the UPF0299 family.

It is found in the cell inner membrane. This chain is UPF0299 membrane protein CGSHiEE_04225, found in Haemophilus influenzae (strain PittEE).